Consider the following 931-residue polypeptide: Adhesion G protein-coupled receptor E1 (931 aa).

The signal sequence occupies residues 1 to 27 (MWGFWLLLFWGFSGMYRWGMTTLPTLG). Topologically, residues 28–644 (QTLGGVNECQ…IMASGELTME (617 aa)) are extracellular. 2 consecutive EGF-like domains span residues 32–80 (GVNE…VECQ) and 81–132 (DVNE…FLCA). 21 cysteine pairs are disulfide-bonded: Cys36/Cys48, Cys42/Cys57, Cys59/Cys79, Cys85/Cys98, Cys92/Cys107, Cys109/Cys131, Cys137/Cys149, Cys143/Cys158, Cys160/Cys171, Cys177/Cys189, Cys183/Cys198, Cys200/Cys220, Cys226/Cys239, Cys233/Cys248, Cys250/Cys270, Cys276/Cys286, Cys280/Cys295, Cys297/Cys317, Cys323/Cys336, Cys330/Cys345, and Cys347/Cys366. The EGF-like 3; calcium-binding domain occupies 133–172 (DVDECLTIGICPKYSNCSNSVGSYSCTCQPGFVLNGSICE). Asn148 and Asn167 each carry an N-linked (GlcNAc...) asparagine glycan. Residues 173 to 221 (DEDECVTRDVCPEHATCHNTLGSYYCTCNSGLESSGGGPMFQGLDESCE) enclose the EGF-like 4; calcium-binding domain. One can recognise an EGF-like 5; calcium-binding domain in the interval 222 to 271 (DVDECSRNSTLCGPTFICINTLGSYSCSCPAGFSLPTFQILGHPADGNCT). N-linked (GlcNAc...) asparagine glycosylation is present at Asn229. N-linked (GlcNAc...) asparagine glycans are attached at residues Asn269 and Asn283. Positions 272–318 (DIDECDDTCPLNSSCTNTIGSYFCTCHPGFASSNGQLNFKDLEVTCE) constitute an EGF-like 6; calcium-binding domain. Residues 319–367 (DIDECTQDPLQCGLNSVCTNVPGSYICGCLPDFQMDPEGSQGYGNFNCK) form the EGF-like 7; calcium-binding domain. Residues Asn405, Asn417, Asn474, and Asn498 are each glycosylated (N-linked (GlcNAc...) asparagine). The GAIN-B domain maps to 482-642 (EYLDIESKVI…AIIMASGELT (161 aa)). Residues 506 to 508 (RGD) carry the Cell attachment site motif. Cystine bridges form between Cys595–Cys624 and Cys612–Cys626. Residues 595–642 (CVSWNTDVEDGRWTPSGCEIVEASETHTVCSCNRMANLAIIMASGELT) are GPS. Residues 645-672 (FSLYIISHVGTVISLVCLALAIATFLLC) form a helical membrane-spanning segment. The Cytoplasmic segment spans residues 673 to 679 (RAVQNHN). Residues 680 to 701 (TYMHLHLCVCLFLAKILFLTGI) form a helical membrane-spanning segment. Residues 702-711 (DKTDNQTACA) lie on the Extracellular side of the membrane. An N-linked (GlcNAc...) asparagine glycan is attached at Asn706. The chain crosses the membrane as a helical span at residues 712–735 (IIAGFLHYLFLACFFWMLVEAVML). The Cytoplasmic portion of the chain corresponds to 736–754 (FLMVRNLKVVNYFSSRNIK). A helical membrane pass occupies residues 755-776 (MLHLCAFGYGLPVLVVIISASV). The Extracellular segment spans residues 777–792 (QPRGYGMHNRCWLNTE). The helical transmembrane segment at 793–821 (TGFIWSFLGPVCMIITINSVLLAWTLWVL) threads the bilayer. At 822–839 (RQKLCSVSSEVSKLKDTR) the chain is on the cytoplasmic side. Residues 840–859 (LLTFKAIAQIFILGCSWVLG) form a helical membrane-spanning segment. Over 860–874 (IFQIGPLASIMAYLF) the chain is Extracellular. The chain crosses the membrane as a helical span at residues 875-897 (TIINSLQGAFIFLIHCLLNRQVR). The Cytoplasmic segment spans residues 898 to 931 (DEYKKLLTRKTDLSSHSQTSGILLSSMPSTSKMG).

The protein belongs to the G-protein coupled receptor 2 family. Adhesion G-protein coupled receptor (ADGR) subfamily. In macrophages; but absent from those which are localized within T-cell areas of lymph nodes and spleen. Low level of expression on blood monocytes.

It localises to the cell membrane. Functionally, orphan receptor involved in cell adhesion and probably in cell-cell interactions specifically involving cells of the immune system. May play a role in regulatory T-cells (Treg) development. In Mus musculus (Mouse), this protein is Adhesion G protein-coupled receptor E1 (Adgre1).